Consider the following 368-residue polypeptide: N-acetylneuraminate epimerase (368 aa).

A signal peptide spans 1–19 (MNKTITALTIIMASFATNA). Kelch repeat units follow at residues 40 to 84 (TVYI…AFID), 86 to 137 (NLYV…FVHN), 139 to 173 (KAYVTGGVNQNIFNGYFEDLNEAGKDSTTIDKINA), 174 to 219 (HYFD…VNKG), 222 to 265 (TWLI…VAGG), 287 to 336 (ENYQ…PWNN), and 338 to 367 (LLIIGGETAGGKAVTDSVLISVKDNKVTVQ). Residue Glu-228 is the Proton acceptor of the active site.

This sequence belongs to the NanM family. As to quaternary structure, homodimer.

The protein localises to the periplasm. It catalyses the reaction N-acetyl-alpha-neuraminate = N-acetyl-beta-neuraminate. In terms of biological role, converts alpha-N-acetylneuranimic acid (Neu5Ac) to the beta-anomer, accelerating the equilibrium between the alpha- and beta-anomers. Probably facilitates sialidase-negative bacteria to compete successfully for limited amounts of extracellular Neu5Ac, which is likely taken up in the beta-anomer. In addition, the rapid removal of sialic acid from solution might be advantageous to the bacterium to damp down host responses. The polypeptide is N-acetylneuraminate epimerase (Escherichia coli O1:K1 / APEC).